Consider the following 1020-residue polypeptide: Sodium/potassium-transporting ATPase subunit alpha-2 (1020 aa).

A propeptide spanning residues 1-5 is cleaved from the precursor; the sequence is MGRGA. Residues 1-31 form a disordered region; that stretch reads MGRGAGREYSPAATTAENGGGKKKQKEKELD. Over 6–85 the chain is Cytoplasmic; it reads GREYSPAATT…NALTPPPTTP (80 aa). Ser10 carries the post-translational modification Phosphoserine. An interaction with phosphoinositide-3 kinase region spans residues 80–82; it reads PPP. Residues 86-106 form a helical membrane-spanning segment; sequence EWVKFCRQLFGGFSILLWIGA. The Extracellular segment spans residues 107–129; sequence ILCFLAYGIQAAMEDEPSNDNLY. Residues 130–150 traverse the membrane as a helical segment; it reads LGVVLAAVVIVTGCFSYYQEA. Topologically, residues 151-286 are cytoplasmic; sequence KSSKIMDSFK…VGRTPIAMEI (136 aa). Polar residues predominate over residues 212–227; sequence DNSSLTGESEPQTRSP. The interval 212–231 is disordered; the sequence is DNSSLTGESEPQTRSPEFTH. Residues 287-306 traverse the membrane as a helical segment; the sequence is EHFIQLITGVAVFLGVSFFV. Over 307–318 the chain is Extracellular; it reads LSLILGYSWLEA. Residues 319–336 traverse the membrane as a helical segment; the sequence is VIFLIGIIVANVPEGLLA. The Cytoplasmic segment spans residues 337–769; it reads TVTVCLTLTA…EEGRLIFDNL (433 aa). Residue Asp374 is the 4-aspartylphosphate intermediate of the active site. Residues Ser439, Ser450, Ser496, and Ser559 each carry the phosphoserine modification. Thr570 carries the post-translational modification Phosphothreonine. Phosphoserine occurs at positions 587 and 672. Mg(2+) contacts are provided by Asp714 and Asp718. Residues 770 to 789 form a helical membrane-spanning segment; that stretch reads KKSIAYTLTSNIPEITPFLL. At 790 to 799 the chain is on the extracellular side; sequence FIIANIPLPL. A helical transmembrane segment spans residues 800 to 820; sequence GTVTILCIDLGTDMVPAISLA. The Cytoplasmic portion of the chain corresponds to 821–840; it reads YEAAESDIMKRQPRNSQTDK. Residue Ser826 is modified to Phosphoserine. A helical transmembrane segment spans residues 841–863; that stretch reads LVNERLISMAYGQIGMIQALGGF. The Extracellular portion of the chain corresponds to 864–915; that stretch reads FTYFVILAENGFLPSRLLGIRLDWDDRTMNDLEDSYGQEWTYEQRKVVEFTC. The helical transmembrane segment at 916–935 threads the bilayer; it reads HTAFFASIVVVQWADLIICK. Residues 936-948 are Cytoplasmic-facing; it reads TRRNSVFQQGMKN. Phosphoserine; by PKA is present on Ser940. The helical transmembrane segment at 949 to 967 threads the bilayer; that stretch reads KILIFGLLEETALAAFLSY. Residues 968 to 982 are Extracellular-facing; it reads CPGMGVALRMYPLKV. Residues 983–1003 form a helical membrane-spanning segment; the sequence is TWWFCAFPYSLLIFIYDEVRK. The Cytoplasmic segment spans residues 1004-1020; sequence LILRRYPGGWVEKETYY.

It belongs to the cation transport ATPase (P-type) (TC 3.A.3) family. Type IIC subfamily. As to quaternary structure, the sodium/potassium-transporting ATPase is composed of a catalytic alpha subunit, an auxiliary non-catalytic beta subunit and an additional regulatory subunit. Interacts with regulatory subunit FXYD1.

It localises to the membrane. The protein localises to the cell membrane. It catalyses the reaction K(+)(out) + Na(+)(in) + ATP + H2O = K(+)(in) + Na(+)(out) + ADP + phosphate + H(+). This is the catalytic component of the active enzyme, which catalyzes the hydrolysis of ATP coupled with the exchange of sodium and potassium ions across the plasma membrane. This action creates the electrochemical gradient of sodium and potassium, providing the energy for active transport of various nutrients. This Homo sapiens (Human) protein is Sodium/potassium-transporting ATPase subunit alpha-2 (ATP1A2).